A 268-amino-acid polypeptide reads, in one-letter code: MERYESLFTQLKERKEGAFIPFVTLGDPGIEQSLKIIDTLIEAGADALELGIPFSDPLADGPTIQNATLRAFAAGVTPAQCFEVLALIRQKHPTIPIGLLMYANLVFNKGIDEFYAECEKVGVDSVLVADVPVEESAPFRQAALRHNVAPIFICPPNADDDLLRQIASYGRGYTYLLSRAGVTGAENRAALPLNHLVAKLKEYNAAPPLQGFGISAPDQVKAAIDAGAAGAISGSAIVKIIEQHINEPEKMLAALKAFVQPMKAATRS.

Active-site proton acceptor residues include Glu-49 and Asp-60.

It belongs to the TrpA family. As to quaternary structure, tetramer of two alpha and two beta chains.

The catalysed reaction is (1S,2R)-1-C-(indol-3-yl)glycerol 3-phosphate + L-serine = D-glyceraldehyde 3-phosphate + L-tryptophan + H2O. It participates in amino-acid biosynthesis; L-tryptophan biosynthesis; L-tryptophan from chorismate: step 5/5. In terms of biological role, the alpha subunit is responsible for the aldol cleavage of indoleglycerol phosphate to indole and glyceraldehyde 3-phosphate. The chain is Tryptophan synthase alpha chain from Escherichia coli O81 (strain ED1a).